Consider the following 114-residue polypeptide: Large ribosomal subunit protein bL19 (114 aa).

Belongs to the bacterial ribosomal protein bL19 family.

In terms of biological role, this protein is located at the 30S-50S ribosomal subunit interface and may play a role in the structure and function of the aminoacyl-tRNA binding site. This Listeria innocua serovar 6a (strain ATCC BAA-680 / CLIP 11262) protein is Large ribosomal subunit protein bL19 (rplS).